Here is a 159-residue protein sequence, read N- to C-terminus: C-type lectin BJcuL (159 aa).

The N-terminal stretch at 1 to 24 (MGRFLFVASSACWFVFLSLSGAKG) is a signal peptide. Disulfide bonds link C27-C38, C55-C155, C62-C157, and C130-C147. Residues 34 to 156 (MNGLCYKIFN…CESKNAFLCQ (123 aa)) form the C-type lectin domain. Ca(2+)-binding residues include Q120, D122, E128, N143, and D144. A Galactose-binding motif is present at residues 120 to 122 (QPD).

Belongs to the true venom lectin family. Homodecamer of disulfide-linked dimers arranged in two 5-fold symmetric pentamers. Binds the gentamicin group of aminoglycoside antibiotics at the dimeric interface near the intermolecular disulfide bond. In terms of tissue distribution, expressed by the venom gland.

The protein localises to the secreted. Hemagglutination activity is inhibited by lactose (MIC=2.5 mM), galactose (MIC=10 mM), and raffinose. Is very weakly or not inhibited by gentamicin, kanamycin, glucose and sucrose. Its function is as follows. Galactose-binding lectin which recognizes specific carbohydrate structures and agglutinates a variety of animal cells by binding to cell-surface glycoproteins and glycolipids. Calcium-dependent lectin. Also binds lactose and raffinose. Shows high hemagglutinating activity on mammalian erythrocytes. It also involved in immunological functions, since it is able of inducing potent neutrophil activation. In vivo, it causes edema and increases vascular permeability after injection into mouse hind paws (10-100 ug/paw). In anesthetized rats, it decreases the blood pressure by approximately 15%, with a rapid return to the resting level. Is an effective inhibitor of cell growth in some cancer cell lines, especially against renal and pancreatic cancer cell lines, human breast and ovarian carcinoma, glioblastoma and a bovine brain microvascular endothelial cell line. This chain is C-type lectin BJcuL, found in Bothrops jararacussu (Jararacussu).